Here is a 334-residue protein sequence, read N- to C-terminus: Ribosomal RNA large subunit methyltransferase F (334 aa).

Residues 1-25 are disordered; it reads MPRPSSPRPDAERKSASPLHPRNRH.

It belongs to the methyltransferase superfamily. METTL16/RlmF family.

It is found in the cytoplasm. The enzyme catalyses adenosine(1618) in 23S rRNA + S-adenosyl-L-methionine = N(6)-methyladenosine(1618) in 23S rRNA + S-adenosyl-L-homocysteine + H(+). Its function is as follows. Specifically methylates the adenine in position 1618 of 23S rRNA. In Pseudomonas paraeruginosa (strain DSM 24068 / PA7) (Pseudomonas aeruginosa (strain PA7)), this protein is Ribosomal RNA large subunit methyltransferase F.